Here is a 413-residue protein sequence, read N- to C-terminus: MFCIIHFGNPKNDKFLGSSTLYSQKLKTNNIKILCLQVFYYNIYESTNNNNNNKNKNKTLLLNNIRTYSTLSKGALSTTTTATTKKMSMDDSFELPTNLNHFLSYVPSLEYHMHKGQCGRIGVFGGSAEYTGAPFFAGITSLRLGADIVHIFAPSEGGTATAIKTLSPELIVHPLDQQMDPSTIIPWLLSIHVLIIGPGLGRSSIAWKSAKEVIKAARNINLPMVLDGDALRLICEDLELVKGYDKVILTPNFVEYRALSDAAKKLNNDNSNNILSPSDLAKALGNVVIVQKGQEDIITDGTISYSCDKAGMPRRCGGQGDVLAGVIGTFYAWTQNALKGKTSEELEHLKESIGENQSAAASAAYAGCVLVRYAAKLAFKNNRRSTITDDIIKSVPNALVWGFLTDDRGRPTI.

Residues 98–402 enclose the YjeF C-terminal domain; sequence NLNHFLSYVP…KSVPNALVWG (305 aa). Residues Gly199 and 252 to 258 contribute to the (6S)-NADPHX site; that span reads NFVEYRA. Residues 292-296 and 311-320 contribute to the ATP site; these read KGQED and GMPRRCGGQG. Asp321 contacts (6S)-NADPHX.

The protein belongs to the NnrD/CARKD family. Requires Mg(2+) as cofactor.

The catalysed reaction is (6S)-NADHX + ATP = ADP + phosphate + NADH + H(+). It carries out the reaction (6S)-NADPHX + ATP = ADP + phosphate + NADPH + H(+). Catalyzes the dehydration of the S-form of NAD(P)HX at the expense of ATP, which is converted to ADP. Together with NAD(P)HX epimerase, which catalyzes the epimerization of the S- and R-forms, the enzyme allows the repair of both epimers of NAD(P)HX, a damaged form of NAD(P)H that is a result of enzymatic or heat-dependent hydration. The protein is ATP-dependent (S)-NAD(P)H-hydrate dehydratase of Heterostelium pallidum (strain ATCC 26659 / Pp 5 / PN500) (Cellular slime mold).